A 720-amino-acid chain; its full sequence is DNA ligase (720 aa).

Residues 60-64 (DYDYD), 109-110 (SL), and Glu140 contribute to the NAD(+) site. The N6-AMP-lysine intermediate role is filled by Lys142. Arg163 and Glu201 together coordinate NAD(+). The interval 220-239 (GLPPFANPRNAAAGSIRQKD) is disordered. NAD(+)-binding residues include Lys320 and Lys344. Zn(2+) is bound by residues Cys438, Cys441, Cys456, and Cys461. The 91-residue stretch at 619–709 (KVADVLKGKT…VDLEKIKKED (91 aa)) folds into the BRCT domain.

Belongs to the NAD-dependent DNA ligase family. LigA subfamily. Requires Mn(2+) as cofactor. Mg(2+) serves as cofactor.

It catalyses the reaction NAD(+) + (deoxyribonucleotide)n-3'-hydroxyl + 5'-phospho-(deoxyribonucleotide)m = (deoxyribonucleotide)n+m + AMP + beta-nicotinamide D-nucleotide.. In terms of biological role, DNA ligase that catalyzes the formation of phosphodiester linkages between 5'-phosphoryl and 3'-hydroxyl groups in double-stranded DNA using NAD as a coenzyme and as the energy source for the reaction. It is essential for DNA replication and repair of damaged DNA. This is DNA ligase from Aquifex aeolicus (strain VF5).